Consider the following 1406-residue polypeptide: MKDLLKFLKAQTKTEEFDAIKIALASPDMIRSWSFGEVKKPETINYRTFKPERDGLFCARIFGPVKDYECLCGKYKRLKHRGVICEKCGVEVTQTKVRRERMGHIELASPTAHIWFLKSLPSRIGLLLDMPLRDIERVLYFESYVVIEGGMTNLERRQILTEEQYLDALEEFGDEFDAKMGAEAIQALLKNMDLEAECEILREELNETNSETKRKKLTKRIKLLEAFVQSGNKPEWMILTVLPVLPPDLRPLVPLDGGRFATSDLNDLYRRVINRNNRLKRLLDLAAPDIIVRNEKRMLQEAVDALLDNGRRGRAITGSNKRPLKSLADMIKGKQGRFRQNLLGKRVDYSGRSVITVGPYLRLHQCGLPKKMALELFKPFIYGKLELRGLATTIKAAKKMVEREEAVVWDILDEVIREHPVLLNRAPTLHRLGIQAFEPVLIEGKAIQLHPLVCAAYNADFDGDQMAVHVPLTLEAQLEARALMMSTNNILSPANGEPIIVPSQDVVLGLYYMTRDCVNAKGEGMVLTGPKEAERIYRAGLASLHARVKVRITEEIRNTEGESTSRTSIIDTTVGRAILWMIVPKGLPYSIVNQPLGKKAISKMLNTCYRILGLKPTVIFADQIMYTGFAYAARSGASVGIDDMVIPEAKAGIIEEAETEVAEIQEQFQSGLVTAGERYNKVIDIWAAANERVAKAMMDNLSVEDVVNRDGVVEQQVSFNSIFMMADSGARGSAAQIRQLAGMRGLMAKPDGSIIETPITANFREGLNVLQYFISTHGARKGLADTALKTANSGYLTRRLVDVAQDLVVTEDDCGTHNGIVMTPVIEGGDVKEPLRDRVLGRVTAEEVIKPGTADILVPRNTLLDEKWCDLLEENSVDSVKVRSVVSCETDFGVCANCYGRDLARGHIINKGEAVGVIAAQSIGEPGTQLTMRTFHIGGAASRAAAESSIQVKNKGSLKLSNVKFVTNAAGKLVITSRNTELKLIDEFGRTKESYKVPYGAVMAKGDGAEVQGGETVANWDPHIMPVVTEVSGFIRFADMIDGQTITRQTDELTGLSSLVVLDSAERTGSGKDLRPALKIVDAKGDDVLIPGTDMPAQYFLPGKAIVQLEDGIQIGAGDTLARIPQESSGTKDITGGLPRVADLFEARRPKEPAILAEISGIISFGKETKGKRRLVISPLDGSDAYEEMIPKWRQLNVFEGEIVERGDVVSDGPESPHDILRLRGVHAVTRYITNEVQEVYRLQGVKINDKHIEVIVRQMLRKGTIVDAGSTDFLEGEQAEMSRVKIANRKLAAEGKIEATFTRDLLGITKASLATESFISAASFQETTRVLTEAAVAGKRDELRGLKENVIVGRLIPAGTGYAYHQDRMRRKAQGEAPVVPQVSADEATANLAELLNAGFGNSKD.

Positions 70, 72, 85, and 88 each coordinate Zn(2+). Positions 460, 462, and 464 each coordinate Mg(2+). Residues Cys-814, Cys-888, Cys-895, and Cys-898 each coordinate Zn(2+).

This sequence belongs to the RNA polymerase beta' chain family. In terms of assembly, the RNAP catalytic core consists of 2 alpha, 1 beta, 1 beta' and 1 omega subunit. When a sigma factor is associated with the core the holoenzyme is formed, which can initiate transcription. The cofactor is Mg(2+). Zn(2+) is required as a cofactor.

It catalyses the reaction RNA(n) + a ribonucleoside 5'-triphosphate = RNA(n+1) + diphosphate. In terms of biological role, DNA-dependent RNA polymerase catalyzes the transcription of DNA into RNA using the four ribonucleoside triphosphates as substrates. The sequence is that of DNA-directed RNA polymerase subunit beta' from Yersinia enterocolitica serotype O:8 / biotype 1B (strain NCTC 13174 / 8081).